Reading from the N-terminus, the 122-residue chain is Large ribosomal subunit protein bL12 (122 aa).

Belongs to the bacterial ribosomal protein bL12 family. Homodimer. Part of the ribosomal stalk of the 50S ribosomal subunit. Forms a multimeric L10(L12)X complex, where L10 forms an elongated spine to which 2 to 4 L12 dimers bind in a sequential fashion. Binds GTP-bound translation factors.

Functionally, forms part of the ribosomal stalk which helps the ribosome interact with GTP-bound translation factors. Is thus essential for accurate translation. The sequence is that of Large ribosomal subunit protein bL12 from Streptococcus thermophilus (strain ATCC BAA-491 / LMD-9).